The chain runs to 346 residues: Methionine import ATP-binding protein MetN 1 (346 aa).

The 240-residue stretch at 2–241 folds into the ABC transporter domain; sequence IELKNVSKVF…PQHVTTKKFV (240 aa). ATP is bound at residue 38-45; that stretch reads GYSGAGKS.

Belongs to the ABC transporter superfamily. Methionine importer (TC 3.A.1.24) family. In terms of assembly, the complex is composed of two ATP-binding proteins (MetN), two transmembrane proteins (MetI) and a solute-binding protein (MetQ).

It localises to the cell membrane. It carries out the reaction L-methionine(out) + ATP + H2O = L-methionine(in) + ADP + phosphate + H(+). The enzyme catalyses D-methionine(out) + ATP + H2O = D-methionine(in) + ADP + phosphate + H(+). Its function is as follows. Part of the ABC transporter complex MetNIQ involved in methionine import. Responsible for energy coupling to the transport system. This is Methionine import ATP-binding protein MetN 1 from Bacillus cereus (strain ZK / E33L).